The following is a 242-amino-acid chain: Murein peptide amidase A (242 aa).

Positions 1-234 (MTVTRPRAER…FAMANLLRWH (234 aa)) constitute a Peptidase M14 domain. The Zn(2+) site is built by His-49, Glu-52, and His-157. Glu-210 serves as the catalytic Proton donor/acceptor.

Belongs to the peptidase M14 family. In terms of assembly, homodimer. Requires Zn(2+) as cofactor.

It localises to the cytoplasm. It catalyses the reaction L-alanyl-gamma-D-glutamyl-meso-2,6-diaminopimelate + H2O = L-alanyl-D-glutamate + meso-2,6-diaminopimelate. The protein operates within cell wall degradation; peptidoglycan degradation. Involved in muropeptide degradation. Catalyzes the hydrolysis of the gamma-D-glutamyl-diaminopimelic acid (gamma-D-Glu-Dap) amide bond in the murein tripeptide L-alanyl-gamma-D-glutamyl-meso-diaminopimelic acid, leading to the formation of L-Ala-gamma-D-Glu and Dap. The chain is Murein peptide amidase A from Escherichia coli O157:H7.